We begin with the raw amino-acid sequence, 260 residues long: Metallo-beta-lactamase domain-containing protein 1 (260 aa).

The Zn(2+) site is built by H118, H120, D122, H123, H173, D196, and H235.

The protein belongs to the metallo-beta-lactamase superfamily. Glyoxalase II family. As to quaternary structure, homodimer. Zn(2+) is required as a cofactor.

Its subcellular location is the cytoplasm. It localises to the cytosol. The protein localises to the nucleus. It catalyses the reaction a ribonucleotidyl-ribonucleotide-RNA + H2O = a 3'-end ribonucleotide-RNA + a 5'-end 5'-phospho-ribonucleoside-RNA + H(+). Endoribonuclease that catalyzes the hydrolysis of histone-coding pre-mRNA 3'-end. Involved in histone pre-mRNA processing during the S-phase of the cell cycle, which is required for entering/progressing through S-phase. Cleaves histone pre-mRNA at a major and a minor cleavage site after the 5'-ACCCA-3' and the 5'-ACCCACA-3' sequence, respectively, and located downstream of the stem-loop. May require the presence of the HDE element located at the histone pre-RNA 3'-end to avoid non-specific cleavage. The polypeptide is Metallo-beta-lactamase domain-containing protein 1 (Mus musculus (Mouse)).